A 524-amino-acid chain; its full sequence is DNA damage-binding protein CMR1 (524 aa).

Residues 35–79 (EKIIPKPAPPKPKRASAPRAKREPVKRETARPTRQSSRLAGLDAD) form a disordered region. Basic and acidic residues predominate over residues 54 to 65 (AKREPVKRETAR). 7 WD repeats span residues 184–225 (LVPQ…VKAE), 245–285 (THSR…STEA), 295–332 (LPIS…STAE), 336–376 (LTDQ…GKGD), 385–425 (THDS…KWTA), 447–490 (GRWV…LAQL), and 493–524 (DGIT…CLWM).

Belongs to the WD repeat DDB2/WDR76 family.

In terms of biological role, DNA-binding protein that binds to both single- and double-stranded DNA. Binds preferentially to UV-damaged DNA. May be involved in DNA-metabolic processes. The sequence is that of DNA damage-binding protein CMR1 from Chaetomium globosum (strain ATCC 6205 / CBS 148.51 / DSM 1962 / NBRC 6347 / NRRL 1970) (Soil fungus).